Consider the following 236-residue polypeptide: MALKTLSAKAAAALDRELMSTGAFSIDQLMELAGLSVSQAVARVHPTKQGRRVLVAVGPGNNGGDGLVAARHLFHYGYQPAIYYPKRPKNDLYQRLVKQCEDLEIPFVDDFFAALESTDHVVDAIFGFSFSGEVREPFPAVINAMAETKVPVTSVDAPSSWDINEGPPKSGVGSNFHPNVLVSLTAPKPLVKYFKGRHFVGGRFVAPSIAKKYDFDVPKYEGIDQIVEITDNQVKI.

One can recognise a YjeF N-terminal domain in the interval 11-217; the sequence is AAALDRELMS…SIAKKYDFDV (207 aa). 61–65 contacts (6S)-NADPHX; it reads NNGGD. K(+)-binding residues include Asn-62 and Asp-123. Residues 127-133 and Asp-156 each bind (6S)-NADPHX; that span reads GFSFSGE. Ser-159 is a K(+) binding site.

Belongs to the NnrE/AIBP family. The cofactor is K(+).

It localises to the cytoplasm. It is found in the mitochondrion. It catalyses the reaction (6R)-NADHX = (6S)-NADHX. The enzyme catalyses (6R)-NADPHX = (6S)-NADPHX. Catalyzes the epimerization of the S- and R-forms of NAD(P)HX, a damaged form of NAD(P)H that is a result of enzymatic or heat-dependent hydration. This is a prerequisite for the S-specific NAD(P)H-hydrate dehydratase to allow the repair of both epimers of NAD(P)HX. The chain is NAD(P)H-hydrate epimerase from Neurospora crassa (strain ATCC 24698 / 74-OR23-1A / CBS 708.71 / DSM 1257 / FGSC 987).